Reading from the N-terminus, the 45-residue chain is Cytochrome c6 (45 aa).

The heme c site is built by Cys-12, Cys-15, and His-16.

Belongs to the cytochrome c family. PetJ subfamily. Monomer. Binds 1 heme c group covalently per subunit.

Its subcellular location is the cellular thylakoid lumen. In terms of biological role, functions as an electron carrier between membrane-bound cytochrome b6-f and photosystem I in oxygenic photosynthesis. The polypeptide is Cytochrome c6 (petJ) (Prochlorothrix hollandica).